The sequence spans 1055 residues: Endo-1,4-beta-xylanase A (1055 aa).

The first 29 residues, 1-29, serve as a signal peptide directing secretion; that stretch reads MRKKRRGFLNASTAVLVGILAGFLGVVLA. Positions 30-357 are a; sequence ATGALGFAVR…TTSAEIKLEM (328 aa). The GH10 domain maps to 360–688; it reads EEEIPALKDV…KLAYWAIVAP (329 aa). Residue Glu498 is the Proton donor of the active site. Glu604 (nucleophile) is an active-site residue. 2 consecutive CBM-cenC domains span residues 720-851 and 895-1040; these read PIEI…TNSQ and KSVA…PTNN.

Belongs to the glycosyl hydrolase 10 (cellulase F) family.

It carries out the reaction Endohydrolysis of (1-&gt;4)-beta-D-xylosidic linkages in xylans.. The sequence is that of Endo-1,4-beta-xylanase A (xynA) from Thermotoga neapolitana.